Here is a 533-residue protein sequence, read N- to C-terminus: L-aspartate oxidase (533 aa).

FAD is bound by residues 16–19, Lys38, 45–52, and Asp223; these read SGAA and ATFYAQGG. Residue Arg290 is the Proton donor/acceptor of the active site. Residues Glu375 and 391–392 each bind FAD; that span reads SL.

The protein belongs to the FAD-dependent oxidoreductase 2 family. NadB subfamily. It depends on FAD as a cofactor.

It is found in the cytoplasm. The enzyme catalyses L-aspartate + O2 = iminosuccinate + H2O2. Its pathway is cofactor biosynthesis; NAD(+) biosynthesis; iminoaspartate from L-aspartate (oxidase route): step 1/1. Its function is as follows. Catalyzes the oxidation of L-aspartate to iminoaspartate, the first step in the de novo biosynthesis of NAD(+). The sequence is that of L-aspartate oxidase (nadB) from Yersinia pestis.